The primary structure comprises 338 residues: S-adenosylmethionine:tRNA ribosyltransferase-isomerase (338 aa).

It belongs to the QueA family. In terms of assembly, monomer.

The protein resides in the cytoplasm. The enzyme catalyses 7-aminomethyl-7-carbaguanosine(34) in tRNA + S-adenosyl-L-methionine = epoxyqueuosine(34) in tRNA + adenine + L-methionine + 2 H(+). It participates in tRNA modification; tRNA-queuosine biosynthesis. In terms of biological role, transfers and isomerizes the ribose moiety from AdoMet to the 7-aminomethyl group of 7-deazaguanine (preQ1-tRNA) to give epoxyqueuosine (oQ-tRNA). The sequence is that of S-adenosylmethionine:tRNA ribosyltransferase-isomerase from Francisella philomiragia subsp. philomiragia (strain ATCC 25017 / CCUG 19701 / FSC 153 / O#319-036).